A 296-amino-acid chain; its full sequence is uncharacterized protein (296 aa).

This is an uncharacterized protein from Magallana gigas (Pacific oyster).